A 1346-amino-acid polypeptide reads, in one-letter code: DNA-directed RNA polymerase subunit beta (1346 aa).

The protein belongs to the RNA polymerase beta chain family. In terms of assembly, the RNAP catalytic core consists of 2 alpha, 1 beta, 1 beta' and 1 omega subunit. When a sigma factor is associated with the core the holoenzyme is formed, which can initiate transcription.

It carries out the reaction RNA(n) + a ribonucleoside 5'-triphosphate = RNA(n+1) + diphosphate. Functionally, DNA-dependent RNA polymerase catalyzes the transcription of DNA into RNA using the four ribonucleoside triphosphates as substrates. This is DNA-directed RNA polymerase subunit beta from Psychromonas ingrahamii (strain DSM 17664 / CCUG 51855 / 37).